The sequence spans 244 residues: MIRKDAKRSALVLFSGGQDSATCLAWALERYETVETLGFDYGQRHRVELECREGFRNAVARAFPAWAERLGDDHMIDLSVLGAISDTAMTREIEIEATANGLPNTFVPGRNLMFMTIAAAIAYRRGLQVLVGGMCETDFSGYPDCRDDTMKALQVALNLGMDTRVLLETPLMWLDKGDTWRLAHQLGGDELVELVRVETHTCYVGERAELHAWGFGCGECPACRLRKRGYEAYLSGEKVTEAPV.

14–24 is an ATP binding site; sequence FSGGQDSATCL. Positions 202, 217, 220, and 223 each coordinate Zn(2+).

It belongs to the QueC family. Zn(2+) is required as a cofactor.

It carries out the reaction 7-carboxy-7-deazaguanine + NH4(+) + ATP = 7-cyano-7-deazaguanine + ADP + phosphate + H2O + H(+). It participates in purine metabolism; 7-cyano-7-deazaguanine biosynthesis. Catalyzes the ATP-dependent conversion of 7-carboxy-7-deazaguanine (CDG) to 7-cyano-7-deazaguanine (preQ(0)). This chain is 7-cyano-7-deazaguanine synthase, found in Paraburkholderia phytofirmans (strain DSM 17436 / LMG 22146 / PsJN) (Burkholderia phytofirmans).